Here is a 295-residue protein sequence, read N- to C-terminus: METSMPEYYEVFGEFRGVLMDKRFTKYWEDVEMFLARPDDLVIATYPKSGTTWISEVVYMIYKEGDVEKCKEDAIFNRIPYLECRNEDLINGIKQLKEKESPRIVKTHLPPKLLPASFWEKNCKMIYLCRNAKDVAVSYYYFLLMITSYPNPKSFSEFVEKFMQGQVPYGSWYDHVKAWWEKSKNSRVLFMFYEDMKEDIRREVVKLIEFLERKPSAELVDRIIQHTSFQEMKNNPSTNYTMMPEEMMNQKVSPFMRKGIIGDWKNHFPEALRERFDEHYKQQMKDCTVKFRMEL.

Position 48-53 (48-53) interacts with 3'-phosphoadenylyl sulfate; the sequence is KSGTTW. 106–108 is a substrate binding site; the sequence is KTH. The Proton acceptor role is filled by His108. 3'-phosphoadenylyl sulfate is bound by residues Arg130 and Ser138. A Phosphoserine modification is found at Ser156. Residues Tyr193, 227–232, and 257–259 contribute to the 3'-phosphoadenylyl sulfate site; these read TSFQEM and RKG.

This sequence belongs to the sulfotransferase 1 family. In terms of assembly, homodimer. Testis and at very low level in the placenta.

Its subcellular location is the cytoplasm. The protein localises to the cytosol. The enzyme catalyses estrone + 3'-phosphoadenylyl sulfate = estrone 3-sulfate + adenosine 3',5'-bisphosphate + H(+). It catalyses the reaction 17beta-estradiol + 3'-phosphoadenylyl sulfate = 17beta-estradiol 3-sulfate + adenosine 3',5'-bisphosphate + H(+). It carries out the reaction (24S)-hydroxycholesterol + 3'-phosphoadenylyl sulfate = (24S)-hydroxycholesterol 3-sulfate + adenosine 3',5'-bisphosphate + H(+). The catalysed reaction is 3beta-hydroxyandrost-5-en-17-one + 3'-phosphoadenylyl sulfate = dehydroepiandrosterone 3-sulfate + adenosine 3',5'-bisphosphate + H(+). The enzyme catalyses 4-ethylphenol + 3'-phosphoadenylyl sulfate = 4-ethylphenyl sulfate + adenosine 3',5'-bisphosphate + H(+). Inhibited by estradiol. Functionally, sulfotransferase that utilizes 3'-phospho-5'-adenylyl sulfate (PAPS) as sulfonate donor to catalyze the sulfate conjugation of estradiol and estrone. Is a key enzyme in estrogen homeostasis, the sulfation of estrogens leads to their inactivation. Also sulfates dehydroepiandrosterone, pregnenolone, (24S)-hydroxycholesterol and xenobiotic compounds like ethinylestradiol, equalenin, diethyl stilbesterol and 1-naphthol at significantly lower efficiency. Does not sulfonate cortisol, testosterone and dopamine. May play a role in gut microbiota-host metabolic interaction. O-sulfonates 4-ethylphenol (4-EP), a dietary tyrosine-derived metabolite produced by gut bacteria. The product 4-EPS crosses the blood-brain barrier and may negatively regulate oligodendrocyte maturation and myelination, affecting the functional connectivity of different brain regions associated with the limbic system. This Mus musculus (Mouse) protein is Sulfotransferase 1E1 (Sult1e1).